The following is a 352-amino-acid chain: Phosphatase Herzog (352 aa).

The tract at residues 1-102 (MDATSIITQV…PLPDQQRYLL (102 aa)) is prion-like domain necessary for both protein assembly and membrane targeting. The interval 103 to 267 (PQVRLTDMHR…ELIPLFEKLS (165 aa)) is mediates substrate recognition. Residues 108–266 (TDMHRKCMVI…RELIPLFEKL (159 aa)) form the FCP1 homology domain. 2 disordered regions span residues 284 to 310 (NNQT…LQQQ) and 332 to 352 (TMLN…LQKT).

In terms of assembly, monomer. Forms higher-order protein aggregates with amyloid-like features during gastrulation. Interacts with babo, dah, Irk1, pch2, Ras64B, sax and Src64B.

The protein localises to the cell membrane. The enzyme catalyses O-phospho-L-seryl-[protein] + H2O = L-seryl-[protein] + phosphate. Phosphatase activity requires amyloid-like aggregation on the membrane. In terms of biological role, prion-like membrane-associated phosphatase. Phosphatase activity depends on amyloid-like assembly at the membrane. Might have a role in establishment of segment polarity in embryos. The sequence is that of Phosphatase Herzog from Drosophila melanogaster (Fruit fly).